A 280-amino-acid chain; its full sequence is Nitrogenase iron protein (280 aa).

Glycine 9 to serine 16 is a binding site for ATP. Cysteine 97 is a binding site for [4Fe-4S] cluster. Arginine 100 is modified (ADP-ribosylarginine; by dinitrogenase reductase ADP-ribosyltransferase). Cysteine 132 contributes to the [4Fe-4S] cluster binding site.

The protein belongs to the NifH/BchL/ChlL family. Homodimer. It depends on [4Fe-4S] cluster as a cofactor. In terms of processing, the reversible ADP-ribosylation of Arg-100 inactivates the nitrogenase reductase and regulates nitrogenase activity.

It carries out the reaction N2 + 8 reduced [2Fe-2S]-[ferredoxin] + 16 ATP + 16 H2O = H2 + 8 oxidized [2Fe-2S]-[ferredoxin] + 2 NH4(+) + 16 ADP + 16 phosphate + 6 H(+). Functionally, the key enzymatic reactions in nitrogen fixation are catalyzed by the nitrogenase complex, which has 2 components: the iron protein and the molybdenum-iron protein. This is Nitrogenase iron protein from Desulforudis audaxviator (strain MP104C).